The primary structure comprises 229 residues: UPF0173 metal-dependent hydrolase Hbut_0886 (229 aa).

The protein belongs to the UPF0173 family.

This Hyperthermus butylicus (strain DSM 5456 / JCM 9403 / PLM1-5) protein is UPF0173 metal-dependent hydrolase Hbut_0886.